The following is a 113-amino-acid chain: Large ribosomal subunit protein bL19 (113 aa).

It belongs to the bacterial ribosomal protein bL19 family.

In terms of biological role, this protein is located at the 30S-50S ribosomal subunit interface and may play a role in the structure and function of the aminoacyl-tRNA binding site. This chain is Large ribosomal subunit protein bL19, found in Mycolicibacterium gilvum (strain PYR-GCK) (Mycobacterium gilvum (strain PYR-GCK)).